Here is a 251-residue protein sequence, read N- to C-terminus: Triosephosphate isomerase (251 aa).

A substrate-binding site is contributed by 9–11 (NWK). The Electrophile role is filled by histidine 95. The active-site Proton acceptor is the glutamate 167. Substrate contacts are provided by residues glycine 173, serine 213, and 234–235 (GG).

This sequence belongs to the triosephosphate isomerase family. Homodimer.

It is found in the cytoplasm. It catalyses the reaction D-glyceraldehyde 3-phosphate = dihydroxyacetone phosphate. Its pathway is carbohydrate biosynthesis; gluconeogenesis. It participates in carbohydrate degradation; glycolysis; D-glyceraldehyde 3-phosphate from glycerone phosphate: step 1/1. Involved in the gluconeogenesis. Catalyzes stereospecifically the conversion of dihydroxyacetone phosphate (DHAP) to D-glyceraldehyde-3-phosphate (G3P). The protein is Triosephosphate isomerase of Lacticaseibacillus casei (strain BL23) (Lactobacillus casei).